Reading from the N-terminus, the 215-residue chain is Peptide methionine sulfoxide reductase MsrA (215 aa).

Residue Cys-58 is part of the active site.

This sequence belongs to the MsrA Met sulfoxide reductase family.

The enzyme catalyses L-methionyl-[protein] + [thioredoxin]-disulfide + H2O = L-methionyl-(S)-S-oxide-[protein] + [thioredoxin]-dithiol. It carries out the reaction [thioredoxin]-disulfide + L-methionine + H2O = L-methionine (S)-S-oxide + [thioredoxin]-dithiol. Its function is as follows. Has an important function as a repair enzyme for proteins that have been inactivated by oxidation. Catalyzes the reversible oxidation-reduction of methionine sulfoxide in proteins to methionine. The protein is Peptide methionine sulfoxide reductase MsrA of Pseudomonas aeruginosa (strain UCBPP-PA14).